A 270-amino-acid chain; its full sequence is Putative ABC transporter ATP-binding protein MG304 homolog (270 aa).

The 231-residue stretch at Leu2–Thr232 folds into the ABC transporter domain. Residue Gly36 to Ser43 participates in ATP binding.

This sequence belongs to the ABC transporter superfamily.

In Mycoplasma pneumoniae (strain ATCC 29342 / M129 / Subtype 1) (Mycoplasmoides pneumoniae), this protein is Putative ABC transporter ATP-binding protein MG304 homolog.